A 458-amino-acid chain; its full sequence is RuvB-like protein 1 (458 aa).

73–80 (GPPGTGKT) is a binding site for ATP.

This sequence belongs to the RuvB family. In terms of assembly, interacts with FRI, and with FLX and FES1, two component of the transcription activator complex FRI-C. Interacts with the disease resistance genes RPM1 and RPP5.

It is found in the nucleus. The catalysed reaction is ATP + H2O = ADP + phosphate + H(+). In terms of biological role, proposed core component of the chromatin remodeling INO80 complex which is involved in transcriptional regulation, DNA replication and probably DNA repair. Component of the NuA4 histone acetyltransferase complex which is involved in transcriptional activation of select genes principally by acetylation of nucleosomal histones H4 and H2A. Has single-stranded DNA-stimulated ATPase and ATP-dependent DNA helicase (3' to 5') activity suggesting a role in nuclear processes such as recombination and transcription. This Arabidopsis thaliana (Mouse-ear cress) protein is RuvB-like protein 1 (RIN1).